The primary structure comprises 488 residues: Catalase (488 aa).

The interval 1–24 is disordered; that stretch reads MTDRRNLTTNQGVPIGDNQNSMTA. Residues 7-23 are compositionally biased toward polar residues; it reads LTTNQGVPIGDNQNSMT. Catalysis depends on residues His-55 and Asn-128. Tyr-338 contributes to the heme binding site.

This sequence belongs to the catalase family. Requires heme as cofactor.

The protein resides in the cytoplasm. It carries out the reaction 2 H2O2 = O2 + 2 H2O. Functionally, decomposes hydrogen peroxide into water and oxygen; serves to protect cells from the toxic effects of hydrogen peroxide. The protein is Catalase (kat) of Listeria seeligeri.